The sequence spans 611 residues: MVLSRLPACLLPLVGTKVSIQGWLVATSRQVSKSISFHQLRDTHGTILQLLSTDKIILQQKREPLVSSTDFSQQKSTSVMRTLSSIPPESVVQVTGKLQRRPEHDRRPGNEFELHVEDVKLLNVAKNLQLFPGDEKPGMRIQLANRHIQLRAPKYNSYLRQRSRLAYQVHSFFNDREFCEVETPLLFKSTPEGAREFVVPSRLNPGKFYALPQSPQQYKQILMASGIGNYYQIARCFRDEDLRFDRQPEFTQIDLEMSFVDKPHEIMEVVEDLLVRLVSFAKGITLAKPFQHITYQHAIDKYGSDKPDIRFELPLKNITSLLPKQDPLISTEILVYNDLSHSLSNAESRKLCEAVGENVVVTSIREHSQLQTWVKKLPQLRQLPIVAEELNQKLQIGINSIVFMTNRPKYLVSGTTPLGKLRLLLHELLVKKKALPELDKDLLKFVWVVDFPLFSPTEEKNQSITSTHHPFTAPHWDDVHLLEKKPLSVRGLHYDIVVNGIELGGGSIRIHNPDIQRFVLKDVLKLPENRYATFEHLIRVLSSGCPPHGGIALGFDRLAALLTNAPGIREVIAFPKTSSGADLLIGSPSAIPEEMLKDYNVAITRQTQNRN.

A mitochondrion-targeting transit peptide spans methionine 1–glutamine 30. Glutamate 192 contacts L-aspartate. An aspartate region spans residues glutamine 216–lysine 219. An L-aspartate-binding site is contributed by arginine 238. ATP contacts are provided by residues arginine 238–glutamate 240 and glutamate 502. Arginine 509 contacts L-aspartate. Residue glycine 554–arginine 557 coordinates ATP.

This sequence belongs to the class-II aminoacyl-tRNA synthetase family. Type 1 subfamily.

The protein resides in the mitochondrion. It carries out the reaction tRNA(Asp) + L-aspartate + ATP = L-aspartyl-tRNA(Asp) + AMP + diphosphate. The protein is Aspartate--tRNA ligase, mitochondrial (msd1) of Schizosaccharomyces pombe (strain 972 / ATCC 24843) (Fission yeast).